Here is a 265-residue protein sequence, read N- to C-terminus: Mlc titration factor A (265 aa).

The Zn(2+) site is built by His-111, His-148, His-152, and Glu-211.

Belongs to the MtfA family. Interacts with Mlc. Requires Zn(2+) as cofactor.

The protein resides in the cytoplasm. In terms of biological role, involved in the modulation of the activity of the glucose-phosphotransferase system (glucose-PTS). Interacts with the transcriptional repressor Mlc, preventing its interaction with DNA and leading to the modulation of expression of genes regulated by Mlc, including ptsG, which encodes the PTS system glucose-specific EIICB component. Functionally, shows zinc-dependent metallopeptidase activity. The sequence is that of Mlc titration factor A from Escherichia coli O8 (strain IAI1).